A 230-amino-acid polypeptide reads, in one-letter code: Extracellular ribonuclease LE (230 aa).

The signal sequence occupies residues 1–25; it reads MASNSAFSLFLILLIITQCLSVLNA. Residue Q37 participates in RNA binding. Disulfide bonds link C43–C49, C50–C106, C79–C125, C186–C221, and C202–C213. Residues H64, F114, 117–118, and 121–122 each bind RNA; these read HE and KH. Residue H64 is the Proton donor of the active site. Residue E118 is part of the active site. H122 functions as the Proton acceptor in the catalytic mechanism.

Belongs to the RNase T2 family.

The protein localises to the secreted. It localises to the extracellular space. The protein resides in the cell wall. It catalyses the reaction a ribonucleotidyl-ribonucleotide-RNA + H2O = a 3'-end 3'-phospho-ribonucleotide-RNA + a 5'-end dephospho-ribonucleoside-RNA + H(+). Probably involved in plant phosphate-starvation rescue system. In Solanum lycopersicum (Tomato), this protein is Extracellular ribonuclease LE.